The chain runs to 282 residues: 2-dehydro-3-deoxyphosphooctonate aldolase (282 aa).

The protein belongs to the KdsA family.

Its subcellular location is the cytoplasm. The enzyme catalyses D-arabinose 5-phosphate + phosphoenolpyruvate + H2O = 3-deoxy-alpha-D-manno-2-octulosonate-8-phosphate + phosphate. Its pathway is carbohydrate biosynthesis; 3-deoxy-D-manno-octulosonate biosynthesis; 3-deoxy-D-manno-octulosonate from D-ribulose 5-phosphate: step 2/3. It participates in bacterial outer membrane biogenesis; lipopolysaccharide biosynthesis. The chain is 2-dehydro-3-deoxyphosphooctonate aldolase from Shewanella piezotolerans (strain WP3 / JCM 13877).